A 430-amino-acid chain; its full sequence is Probable protein phosphatase 1N (430 aa).

The disordered stretch occupies residues 16-65 (CKKKEREKEGREEEEEEEAGRRAPEGPRSLLTAPRRAQRPHGGAEASGGL). A compositionally biased stretch (basic and acidic residues) spans 17-26 (KKKEREKEGR). Positions 66–326 (RFGASAAQGW…DNMTCILVCF (261 aa)) constitute a PPM-type phosphatase domain. Mn(2+)-binding residues include Asp103, Gly104, Asp274, and Asp317. Residues 407–430 (GEKGQDGAGKSNPTHLGSALDMEA) are disordered.

The protein belongs to the PP2C family. It depends on Mg(2+) as a cofactor. Requires Mn(2+) as cofactor.

It catalyses the reaction O-phospho-L-seryl-[protein] + H2O = L-seryl-[protein] + phosphate. The enzyme catalyses O-phospho-L-threonyl-[protein] + H2O = L-threonyl-[protein] + phosphate. The protein is Probable protein phosphatase 1N (PPM1N) of Homo sapiens (Human).